The chain runs to 325 residues: Acetyl-coenzyme A carboxylase carboxyl transferase subunit beta (325 aa).

The CoA carboxyltransferase N-terminal domain occupies 24 to 293 (LWIKCPDSGH…AEIEVVTPEP (270 aa)).

Belongs to the AccD/PCCB family. In terms of assembly, acetyl-CoA carboxylase is a heterohexamer composed of biotin carboxyl carrier protein (AccB), biotin carboxylase (AccC) and two subunits each of ACCase subunit alpha (AccA) and ACCase subunit beta (AccD).

The protein localises to the cytoplasm. It catalyses the reaction N(6)-carboxybiotinyl-L-lysyl-[protein] + acetyl-CoA = N(6)-biotinyl-L-lysyl-[protein] + malonyl-CoA. Its pathway is lipid metabolism; malonyl-CoA biosynthesis; malonyl-CoA from acetyl-CoA: step 1/1. Component of the acetyl coenzyme A carboxylase (ACC) complex. Biotin carboxylase (BC) catalyzes the carboxylation of biotin on its carrier protein (BCCP) and then the CO(2) group is transferred by the transcarboxylase to acetyl-CoA to form malonyl-CoA. The polypeptide is Acetyl-coenzyme A carboxylase carboxyl transferase subunit beta (Rhodopseudomonas palustris (strain BisA53)).